The chain runs to 475 residues: MNFKTTIGLEVHIELKTNSKIFSPSPVEFGDQPNANTNVIDWGYPGVLPQTNKGVVEAGMMAAKALHANITRTQHFDRKNYFYPDNPKAYQVTQADTPIGTDGWIEIEVEGKKKKVGIAEMHIEEDAGKNSHNPNGYSYVDLNRQGTPLIEIVSKPDIESPDEAYAYLEALRQRIQFTGISDVKMEEGSMRVDVNISIRPLGSEKFGTKAELKNINSFNFVRKGLAFEEKRQQKILLAGGQVRPETRRYDEATGQTILMRVKEGAEDYRYFPEPDLPSITIDDEWIKDVEDKMPEMPGKRRARYVEELGLTDYDAMVLTQTKEMSDFFEATVAQGADPKLTANYLMGDVNAYLNDQKVDLQETKLTPEHLASMVKMITDETISSKMAKKVFKAITQGEEPTSWVKAKGLVQLSDPAVLKPMIVEIVDNNEQSVADFKNGKDRAVGFLVGQIMKQTKGQANPKVVNKILMQELNSR.

The protein belongs to the GatB/GatE family. GatB subfamily. As to quaternary structure, heterotrimer of A, B and C subunits.

The catalysed reaction is L-glutamyl-tRNA(Gln) + L-glutamine + ATP + H2O = L-glutaminyl-tRNA(Gln) + L-glutamate + ADP + phosphate + H(+). The enzyme catalyses L-aspartyl-tRNA(Asn) + L-glutamine + ATP + H2O = L-asparaginyl-tRNA(Asn) + L-glutamate + ADP + phosphate + 2 H(+). Functionally, allows the formation of correctly charged Asn-tRNA(Asn) or Gln-tRNA(Gln) through the transamidation of misacylated Asp-tRNA(Asn) or Glu-tRNA(Gln) in organisms which lack either or both of asparaginyl-tRNA or glutaminyl-tRNA synthetases. The reaction takes place in the presence of glutamine and ATP through an activated phospho-Asp-tRNA(Asn) or phospho-Glu-tRNA(Gln). This is Aspartyl/glutamyl-tRNA(Asn/Gln) amidotransferase subunit B from Pediococcus pentosaceus (strain ATCC 25745 / CCUG 21536 / LMG 10740 / 183-1w).